The chain runs to 261 residues: Pantothenate synthetase (261 aa).

29 to 36 lines the ATP pocket; sequence MGALHNGH. Residue H36 is the Proton donor of the active site. A (R)-pantoate-binding site is contributed by Q60. Q60 contributes to the beta-alanine binding site. Position 147-150 (147-150) interacts with ATP; that stretch reads GEKD. Residue Q153 participates in (R)-pantoate binding. Residue 184-187 participates in ATP binding; that stretch reads LSSR.

Belongs to the pantothenate synthetase family. As to quaternary structure, homodimer.

The protein resides in the cytoplasm. The catalysed reaction is (R)-pantoate + beta-alanine + ATP = (R)-pantothenate + AMP + diphosphate + H(+). The protein operates within cofactor biosynthesis; (R)-pantothenate biosynthesis; (R)-pantothenate from (R)-pantoate and beta-alanine: step 1/1. Catalyzes the condensation of pantoate with beta-alanine in an ATP-dependent reaction via a pantoyl-adenylate intermediate. In Francisella tularensis subsp. novicida (strain U112), this protein is Pantothenate synthetase.